The primary structure comprises 248 residues: Ribonuclease PH (248 aa).

Phosphate contacts are provided by residues Arg-86 and 124–126 (GTR).

The protein belongs to the RNase PH family. Homohexameric ring arranged as a trimer of dimers.

The enzyme catalyses tRNA(n+1) + phosphate = tRNA(n) + a ribonucleoside 5'-diphosphate. Its function is as follows. Phosphorolytic 3'-5' exoribonuclease that plays an important role in tRNA 3'-end maturation. Removes nucleotide residues following the 3'-CCA terminus of tRNAs; can also add nucleotides to the ends of RNA molecules by using nucleoside diphosphates as substrates, but this may not be physiologically important. Probably plays a role in initiation of 16S rRNA degradation (leading to ribosome degradation) during starvation. The protein is Ribonuclease PH of Listeria innocua serovar 6a (strain ATCC BAA-680 / CLIP 11262).